We begin with the raw amino-acid sequence, 475 residues long: Ammonium transporter 2 (475 aa).

11 consecutive transmembrane segments (helical) span residues 27–47 (AATL…ASIV), 55–75 (SAFM…LLCY), 120–140 (LVYF…GSVL), 148–168 (WMAF…YSIW), 183–203 (GGYV…YWVG), 218–238 (VLLM…FNGG), 254–274 (TNLS…IFFG), 279–299 (IGAI…AGLI), 302–322 (WAAI…MMII), 336–356 (LAVF…TGLF), and 389–409 (AGAA…LLAI).

The protein belongs to the ammonia transporter channel (TC 1.A.11.2) family. As to expression, higher expression in shoots than roots.

The protein resides in the cell membrane. Functionally, high affinity ammonium transporter that may play an important role in moving ammonium between the apoplast and symplast of cells throughout the plant. Does not transport methylammonium. In Arabidopsis thaliana (Mouse-ear cress), this protein is Ammonium transporter 2 (AMT2).